The chain runs to 323 residues: Down-regulator of invasive growth 2 (323 aa).

A compositionally biased stretch (acidic residues) spans 1–10 (MNKEEQEDPQ). The disordered stretch occupies residues 1–26 (MNKEEQEDPQQEQISTVQENDPRNLQ). Residues 11-26 (QEQISTVQENDPRNLQ) show a composition bias toward polar residues. Residue Ser-34 is modified to Phosphoserine. Residues 67–87 (LSQKEEDHSGKPPTITTSPAE) are disordered. Phosphoserine occurs at positions 225, 266, and 270.

As to quaternary structure, forms a complex with DIG1, STE12 and either FUS3 or KSS1. The interaction of FUS3 with STE12 depends on the presence of both DIG1 and DIG2. STE12 is lost from FUS3/DIG1/DIG2 complex after pheromone treatment. DIG1 and DIG2 have also been reported to interact with CLN1 and CLN2. In terms of processing, phosphorylated by FUS3 and KSS1, in a pheromone-stimulated manner.

It localises to the nucleus. In terms of biological role, DIG2 and DIG1 are negative regulators of the filamentation and pheromone induced mating program. DIG1 and DIG2 inhibit the transcriptional activity of STE12 by direct protein-protein interaction. DIG2 binds to the DNA binding domain (DBD) of STE12 and thus inhibits transcription when overexpressed. This chain is Down-regulator of invasive growth 2 (DIG2), found in Saccharomyces cerevisiae (strain ATCC 204508 / S288c) (Baker's yeast).